We begin with the raw amino-acid sequence, 330 residues long: MNAYYEQDADLGYLQGKNIAILGYGSQGHAHALNLKESGLNVCVGLRPDSSSCDRAREAGLQVNTVAEAVKWADIVMVLLPDQYQKAIYETEIAPNLQPGNTLAFAHGFNIHYNQIVPDKSVNVIMIAPKSPGHLVRRTYTQGNGVPCLIAVHQDATGEARQQALAWAKGLGGTKAGVIETTFKNETETDLFGEQAVLCGGSAELIKAGFETLVEAGYPEELAYFECMHELKLIVDLYYEGGLSRMNFSVSDTAEYGGMTRGPRVITPAVKAEMKKILEEVQDGRFAKEFIDECNGGYKNLNRLRAENSGHAIEKVGSKLRDMMSWLIKK.

Positions 1 to 181 (MNAYYEQDAD…GGTKAGVIET (181 aa)) constitute a KARI N-terminal Rossmann domain. Residues 24–27 (YGSQ), Arg47, Ser50, Ser52, and 82–85 (DQYQ) contribute to the NADP(+) site. Residue His107 is part of the active site. Gly133 provides a ligand contact to NADP(+). A KARI C-terminal knotted domain is found at 182-327 (TFKNETETDL…SKLRDMMSWL (146 aa)). 4 residues coordinate Mg(2+): Asp190, Glu194, Glu226, and Glu230. Ser251 lines the substrate pocket.

The protein belongs to the ketol-acid reductoisomerase family. Mg(2+) serves as cofactor.

It catalyses the reaction (2R)-2,3-dihydroxy-3-methylbutanoate + NADP(+) = (2S)-2-acetolactate + NADPH + H(+). It carries out the reaction (2R,3R)-2,3-dihydroxy-3-methylpentanoate + NADP(+) = (S)-2-ethyl-2-hydroxy-3-oxobutanoate + NADPH + H(+). The protein operates within amino-acid biosynthesis; L-isoleucine biosynthesis; L-isoleucine from 2-oxobutanoate: step 2/4. It functions in the pathway amino-acid biosynthesis; L-valine biosynthesis; L-valine from pyruvate: step 2/4. Involved in the biosynthesis of branched-chain amino acids (BCAA). Catalyzes an alkyl-migration followed by a ketol-acid reduction of (S)-2-acetolactate (S2AL) to yield (R)-2,3-dihydroxy-isovalerate. In the isomerase reaction, S2AL is rearranged via a Mg-dependent methyl migration to produce 3-hydroxy-3-methyl-2-ketobutyrate (HMKB). In the reductase reaction, this 2-ketoacid undergoes a metal-dependent reduction by NADPH to yield (R)-2,3-dihydroxy-isovalerate. The protein is Ketol-acid reductoisomerase (NADP(+)) of Chlorobium limicola (strain DSM 245 / NBRC 103803 / 6330).